We begin with the raw amino-acid sequence, 2655 residues long: Probable polyketide synthase 42 (2655 aa).

The Ketosynthase family 3 (KS3) domain maps to 16–445 (QNGVAVIGVG…GSNCCIILSE (430 aa)). Residues cysteine 186, histidine 325, and histidine 368 each act as for beta-ketoacyl synthase activity in the active site. Residues 634-667 (GIKSDIMVGHSFGEIACSYCSGMVDFKTLCYLTY) are acyl/malonyl transferase. Serine 644 acts as the For acyl/malonyl transferase activity in catalysis. Residues 926–1059 (HPTWKKANKN…ANYSLFKHND (134 aa)) are N-terminal hotdog fold. The PKS/mFAS DH domain maps to 926 to 1234 (HPTWKKANKN…CKSSIPIIDS (309 aa)). The Proton acceptor; for dehydratase activity role is filled by histidine 970. The interval 1074-1234 (NYTIISKDEL…CKSSIPIIDS (161 aa)) is C-terminal hotdog fold. The active-site Proton donor; for dehydratase activity is the aspartate 1146. The tract at residues 1700 to 1719 (YNNNNNNNNNNNNNNNNNNN) is disordered. Residues 2517-2594 (NENNNIGDLL…TTIEIIIKGY (78 aa)) form the Carrier domain. Serine 2554 bears the O-(pantetheine 4'-phosphoryl)serine mark. Residues 2612–2655 (SVVQKETIKDNNENKDDIKIDMDDKKENLKGKKENIDDKKENNN) are disordered. Positions 2617–2655 (ETIKDNNENKDDIKIDMDDKKENLKGKKENIDDKKENNN) are enriched in basic and acidic residues. The stretch at 2618–2655 (TIKDNNENKDDIKIDMDDKKENLKGKKENIDDKKENNN) forms a coiled coil.

The cofactor is pantetheine 4'-phosphate.

Probable polyketide synthase. The chain is Probable polyketide synthase 42 (pks42) from Dictyostelium discoideum (Social amoeba).